Reading from the N-terminus, the 187-residue chain is Dihydrofolate reductase (187 aa).

One can recognise a DHFR domain in the interval 4–185 (PLNCIVAVSQ…IKYKFEVYEK (182 aa)). NADP(+)-binding positions include Ala10 and 16 to 22 (GIGKNGD). A substrate-binding site is contributed by 31–36 (EFKYFQ). Lys33 bears the N6-acetyllysine; alternate mark. Lys33 carries the post-translational modification N6-succinyllysine; alternate. 55 to 57 (RKT) provides a ligand contact to NADP(+). Arg71 serves as a coordination point for substrate. NADP(+)-binding positions include 77–79 (SRE) and 117–124 (GGSSVYQE).

The protein belongs to the dihydrofolate reductase family. As to quaternary structure, homodimer.

The protein resides in the mitochondrion. Its subcellular location is the cytoplasm. It carries out the reaction (6S)-5,6,7,8-tetrahydrofolate + NADP(+) = 7,8-dihydrofolate + NADPH + H(+). Its pathway is cofactor biosynthesis; tetrahydrofolate biosynthesis; 5,6,7,8-tetrahydrofolate from 7,8-dihydrofolate: step 1/1. In terms of biological role, key enzyme in folate metabolism. Contributes to the de novo mitochondrial thymidylate biosynthesis pathway. Catalyzes an essential reaction for de novo glycine and purine synthesis, and for DNA precursor synthesis. Binds its own mRNA. The polypeptide is Dihydrofolate reductase (Dhfr) (Rattus norvegicus (Rat)).